Here is a 442-residue protein sequence, read N- to C-terminus: Histidine--tRNA ligase (442 aa).

This sequence belongs to the class-II aminoacyl-tRNA synthetase family. Homodimer.

It is found in the cytoplasm. It catalyses the reaction tRNA(His) + L-histidine + ATP = L-histidyl-tRNA(His) + AMP + diphosphate + H(+). The chain is Histidine--tRNA ligase from Psychrobacter arcticus (strain DSM 17307 / VKM B-2377 / 273-4).